Here is a 39-residue protein sequence, read N- to C-terminus: QLNFSTGWGRRYADPNADPMAFLTKLIQIEARKLSGCSN.

Position 1 is a pyrrolidone carboxylic acid (glutamine 1). A Tryptophan amide modification is found at tryptophan 8.

It belongs to the AKH/HRTH/RPCH family. As to quaternary structure, adipokinetic hormone precursor-related peptide (APRP) can form three type of disulfide-bond dimers: p1 (alpha-alpha), p2 (alpha-beta), and p3 (beta-beta).

Its subcellular location is the secreted. This hormone, released from cells in the corpora cardiaca, causes release of diglycerides from the fat body and stimulation of muscles to use these diglycerides as an energy source during energy-demanding processes. In Schistocerca gregaria (Desert locust), this protein is Adipokinetic prohormone type 2.